Consider the following 620-residue polypeptide: MNWELYSSPLRVFWRSKVWDEKTSTFTSDENLKIGKMVGKRRRPRPKRSIDLEDSTEQLISGDMVTFPCSVCYRELNKARNFLHKKHHNALSMLGFQWMGGRQPKPKLVSLHRECIISNLLRSSTYNEKVLHNVNYAFEFLWKKQVPSYFKLCDKVGETSTYSPNSNHLMIKGIAICSNNNSAWKAEPNCKFTVVNDFGDKANVCFFGLFDSHYGYAAADLASKEFQVLLLHQLSIQDPSYQMTAEQKQLINSFDTVFREEYRAREEAFSSTYKTFRTSRREYEDTHKAFAKAFWRMDRLLRLGRNETSRVRWSGCSALTCILEGGIKNPHANKDWEKTYQQGSTSLPFQKTPQIISGVLHLANAGNVQAVLCRNGKGFCLTKEHSTRNTKERRRVLYSEAVISSDDPYGLLDGHIKTTRGLGFHGNLRLKKSIIPAPQTISVPIDDLCQFLILATNGLWQVLDKKEVTALVITLFHAYKETHVPRPKSKPWPPIGLLSPPDSNIRVLFQYQPENEDIMSTADGTKGLSDSIYAEAYTHQGTFSPKVTPYDPCSTKENSSLPTIDSKQENEKELCIKNFYKGAAEYIGCELVSAAIEGGSRDSITVMVMFLNGSEYHRLT.

The 439-residue stretch at 173–611 folds into the PPM-type phosphatase domain; that stretch reads GIAICSNNNS…DSITVMVMFL (439 aa).

Belongs to the PP2C family.

In Mus musculus (Mouse), this protein is Protein phosphatase 2C-like domain-containing protein 1 (Pp2d1).